A 247-amino-acid chain; its full sequence is Ribosomal RNA large subunit methyltransferase E (247 aa).

S-adenosyl-L-methionine-binding residues include G99, W101, D123, D139, and D162. The active-site Proton acceptor is the K202.

The protein belongs to the class I-like SAM-binding methyltransferase superfamily. RNA methyltransferase RlmE family.

The protein resides in the cytoplasm. It carries out the reaction uridine(2552) in 23S rRNA + S-adenosyl-L-methionine = 2'-O-methyluridine(2552) in 23S rRNA + S-adenosyl-L-homocysteine + H(+). Its function is as follows. Specifically methylates the uridine in position 2552 of 23S rRNA at the 2'-O position of the ribose in the fully assembled 50S ribosomal subunit. This is Ribosomal RNA large subunit methyltransferase E from Anaplasma phagocytophilum (strain HZ).